The following is a 396-amino-acid chain: DNA excision repair protein ERCC-8 (396 aa).

WD repeat units lie at residues 33-73 (NKDR…LYDL), 88-129 (CSIG…VWDT), 133-173 (QTAD…LCDL), 177-216 (SCSH…LWDV), 235-274 (QAVE…LWNS), 281-321 (LVNY…VYTV), and 325-363 (EQIT…AWVP). The tract at residues 371–396 (DDDETTTKSQLNPAFEDAWSSSDEEG) is disordered. A phosphoserine mark is found at Ser390, Ser391, and Ser392.

In terms of assembly, part of the CSA complex (also named DCX(ERCC8) complex), a DCX E3 ubiquitin-protein ligase complex containing ERCC8, RBX1, DDB1 and CUL4A; the CSA complex interacts with RNA polymerase II; upon UV irradiation it interacts with the COP9 signalosome and preferentially with the hyperphosphorylated form of RNA polymerase II. Interacts with ERCC6/CSB (via CIM motif); promoting recruitment to lesion-stalled RNA polymerase II (Pol II). Interacts with KIAA1530/UVSSA. Interacts with a subunit of RNA polymerase II TFIIH.

Its subcellular location is the nucleus. The protein resides in the chromosome. The protein localises to the nucleus matrix. Its pathway is protein modification; protein ubiquitination. In terms of biological role, substrate-recognition component of the CSA complex, a DCX (DDB1-CUL4-X-box) E3 ubiquitin-protein ligase complex, involved in transcription-coupled nucleotide excision repair (TC-NER), a process during which RNA polymerase II-blocking lesions are rapidly removed from the transcribed strand of active genes. Following recruitment to lesion-stalled RNA polymerase II (Pol II), the CSA complex mediates ubiquitination of Pol II subunit POLR2A/RPB1 at 'Lys-1268', a critical TC-NER checkpoint, governing RNA Pol II stability and initiating DNA damage excision by TFIIH recruitment. The CSA complex also promotes the ubiquitination and subsequent proteasomal degradation of ERCC6/CSB in a UV-dependent manner; ERCC6 degradation is essential for the recovery of RNA synthesis after transcription-coupled repair. Also plays a role in DNA double-strand breaks (DSSBs) repair by non-homologous end joining (NHEJ). The chain is DNA excision repair protein ERCC-8 from Homo sapiens (Human).